Here is a 215-residue protein sequence, read N- to C-terminus: Large ribosomal subunit protein uL4 (215 aa).

The segment at 43–101 (HQRQGTSKTKERGEVRGSGRKLYRQKGTGNARVGDAQSPIRRGGGRAHGARPRDYAHDL) is disordered. Residues 50–59 (KTKERGEVRG) show a composition bias toward basic and acidic residues.

It belongs to the universal ribosomal protein uL4 family. In terms of assembly, part of the 50S ribosomal subunit.

Functionally, one of the primary rRNA binding proteins, this protein initially binds near the 5'-end of the 23S rRNA. It is important during the early stages of 50S assembly. It makes multiple contacts with different domains of the 23S rRNA in the assembled 50S subunit and ribosome. In terms of biological role, forms part of the polypeptide exit tunnel. This Salinibacter ruber (strain DSM 13855 / M31) protein is Large ribosomal subunit protein uL4.